A 376-amino-acid chain; its full sequence is Succinyl-diaminopimelate desuccinylase (376 aa).

His-67 contacts Zn(2+). Residue Asp-69 is part of the active site. Asp-100 is a Zn(2+) binding site. Glu-134 (proton acceptor) is an active-site residue. 3 residues coordinate Zn(2+): Glu-135, Glu-163, and His-349.

It belongs to the peptidase M20A family. DapE subfamily. As to quaternary structure, homodimer. Zn(2+) is required as a cofactor. The cofactor is Co(2+).

The catalysed reaction is N-succinyl-(2S,6S)-2,6-diaminopimelate + H2O = (2S,6S)-2,6-diaminopimelate + succinate. It functions in the pathway amino-acid biosynthesis; L-lysine biosynthesis via DAP pathway; LL-2,6-diaminopimelate from (S)-tetrahydrodipicolinate (succinylase route): step 3/3. Catalyzes the hydrolysis of N-succinyl-L,L-diaminopimelic acid (SDAP), forming succinate and LL-2,6-diaminopimelate (DAP), an intermediate involved in the bacterial biosynthesis of lysine and meso-diaminopimelic acid, an essential component of bacterial cell walls. The chain is Succinyl-diaminopimelate desuccinylase from Pseudoalteromonas atlantica (strain T6c / ATCC BAA-1087).